Here is a 108-residue protein sequence, read N- to C-terminus: C-C motif chemokine 19 (108 aa).

The first 25 residues, methionine 1–glycine 25, serve as a signal peptide directing secretion. 2 cysteine pairs are disulfide-bonded: cysteine 33–cysteine 59 and cysteine 34–cysteine 75. Asparagine 100 carries an N-linked (GlcNAc...) asparagine glycan.

It belongs to the intercrine beta (chemokine CC) family. Interacts with TNFAIP6 (via Link domain). As to expression, highly expressed by dendritic cells in mesenteric and peripheral lymph nodes. Significant expression in spleen (T cell zone or periarteriolar lymphatic sheath) and Peyer patches. Low expression in thymus.

Its subcellular location is the secreted. Functionally, strongly chemotactic for naive (L-selectinhi) CD4 T-cells and for CD8 T-cells and weakly attractive for resting B-cells and memory (L-selectinlo) CD4 T-cells. May play a role in promoting encounters between recirculating T-cells and dendritic cells and in the migration of activated B-cells into the T-zone of secondary lymphoid tissues. Binds to chemokine receptor CCR7. Binds to atypical chemokine receptor ACKR4 and mediates the recruitment of beta-arrestin (ARRB1/2) to ACKR4. The polypeptide is C-C motif chemokine 19 (Ccl19) (Mus musculus (Mouse)).